A 241-amino-acid polypeptide reads, in one-letter code: 3-deoxy-manno-octulosonate cytidylyltransferase (241 aa).

The protein belongs to the KdsB family.

The protein resides in the cytoplasm. It catalyses the reaction 3-deoxy-alpha-D-manno-oct-2-ulosonate + CTP = CMP-3-deoxy-beta-D-manno-octulosonate + diphosphate. Its pathway is nucleotide-sugar biosynthesis; CMP-3-deoxy-D-manno-octulosonate biosynthesis; CMP-3-deoxy-D-manno-octulosonate from 3-deoxy-D-manno-octulosonate and CTP: step 1/1. It participates in bacterial outer membrane biogenesis; lipopolysaccharide biosynthesis. In terms of biological role, activates KDO (a required 8-carbon sugar) for incorporation into bacterial lipopolysaccharide in Gram-negative bacteria. The polypeptide is 3-deoxy-manno-octulosonate cytidylyltransferase (Rickettsia rickettsii (strain Sheila Smith)).